Reading from the N-terminus, the 62-residue chain is Large ribosomal subunit protein uL29 (62 aa).

This sequence belongs to the universal ribosomal protein uL29 family.

In Geobacter metallireducens (strain ATCC 53774 / DSM 7210 / GS-15), this protein is Large ribosomal subunit protein uL29.